The sequence spans 93 residues: SH3 domain-binding glutamic acid-rich-like protein 3 (93 aa).

At S2 the chain carries N-acetylserine. The region spanning 2–93 (SGLRVYSTSV…DTLQEFLKLA (92 aa)) is the Glutaredoxin domain. O-linked (GalNAc...) threonine glycosylation occurs at T9.

This sequence belongs to the SH3BGR family. In terms of assembly, homodimer. Interacts with MYO1C (via its IQ motifs); the interaction is dependent on calcium and takes place at membrane ruffles. Post-translationally, may be glycosylated.

The protein localises to the cytoplasm. It is found in the cytosol. It localises to the cell projection. The protein resides in the ruffle membrane. Its subcellular location is the nucleus. In terms of biological role, could act as a modulator of glutaredoxin biological activity. May play a role in cytoskeleton organization. The polypeptide is SH3 domain-binding glutamic acid-rich-like protein 3 (Sh3bgrl3) (Mus musculus (Mouse)).